Reading from the N-terminus, the 372-residue chain is 4-hydroxy-3-methylbut-2-en-1-yl diphosphate synthase (flavodoxin) (372 aa).

[4Fe-4S] cluster contacts are provided by Cys-270, Cys-273, Cys-305, and Glu-312.

This sequence belongs to the IspG family. Requires [4Fe-4S] cluster as cofactor.

The catalysed reaction is (2E)-4-hydroxy-3-methylbut-2-enyl diphosphate + oxidized [flavodoxin] + H2O + 2 H(+) = 2-C-methyl-D-erythritol 2,4-cyclic diphosphate + reduced [flavodoxin]. Its pathway is isoprenoid biosynthesis; isopentenyl diphosphate biosynthesis via DXP pathway; isopentenyl diphosphate from 1-deoxy-D-xylulose 5-phosphate: step 5/6. In terms of biological role, converts 2C-methyl-D-erythritol 2,4-cyclodiphosphate (ME-2,4cPP) into 1-hydroxy-2-methyl-2-(E)-butenyl 4-diphosphate. This is 4-hydroxy-3-methylbut-2-en-1-yl diphosphate synthase (flavodoxin) from Pseudoalteromonas translucida (strain TAC 125).